Reading from the N-terminus, the 473-residue chain is Glutamate-1-semialdehyde 2,1-aminomutase, chloroplastic (473 aa).

The transit peptide at 1–37 (MSATLTGSGTALGFSCSSKISKRVSSSPSTRCSIKMS) directs the protein to the chloroplast. Lys313 carries the post-translational modification N6-(pyridoxal phosphate)lysine.

Belongs to the class-III pyridoxal-phosphate-dependent aminotransferase family. HemL subfamily. Homodimer. Pyridoxal 5'-phosphate serves as cofactor.

Its subcellular location is the plastid. It localises to the chloroplast. It catalyses the reaction (S)-4-amino-5-oxopentanoate = 5-aminolevulinate. It participates in porphyrin-containing compound metabolism; protoporphyrin-IX biosynthesis; 5-aminolevulinate from L-glutamyl-tRNA(Glu): step 2/2. It functions in the pathway porphyrin-containing compound metabolism; chlorophyll biosynthesis. In Brassica napus (Rape), this protein is Glutamate-1-semialdehyde 2,1-aminomutase, chloroplastic (GSA).